The sequence spans 145 residues: Leghemoglobin-2 (145 aa).

A Globin domain is found at 3–145 (AFSDKQEGLV…ELAAAIKKAY (143 aa)). A nitrated tyrosine mark is found at Tyr-26 and Tyr-31. Heme b is bound at residue Ser-46. The residue at position 46 (Ser-46) is a Phosphoserine. His-62 contributes to the O2 binding site. The heme b site is built by Lys-65, His-93, and Lys-96. Position 134 is a nitrated tyrosine (Tyr-134).

It belongs to the plant globin family. As to quaternary structure, monomer. Post-translationally, nitrated in effective nodules and particularly in hypoxic conditions; this mechanism may play a protective role in the symbiosis by buffering toxic peroxynitrite NO(2)(-). Nitration level decrease during nodule senescence. Phosphorylation at Ser-46 disrupts the molecular environment of its porphyrin ring oxygen binding pocket, thus leading to a reduced oxygen consumption and to the delivery of oxygen O(2) to symbiosomes. As to expression, root nodules.

The protein localises to the cytoplasm. Its subcellular location is the cytosol. It is found in the nucleus. Functionally, leghemoglobin that reversibly binds oxygen O(2) through a pentacoordinated heme iron. In root nodules, facilitates the diffusion of oxygen to the bacteroids while preventing the bacterial nitrogenase from being inactivated by buffering dioxygen, nitric oxide and carbon monoxide, and promoting the formation of reactive oxygen species (ROS, e.g. H(2)O(2)). This role is essential for symbiotic nitrogen fixation (SNF). The sequence is that of Leghemoglobin-2 from Vigna unguiculata (Cowpea).